Here is a 49-residue protein sequence, read N- to C-terminus: Large ribosomal subunit protein bL33A (49 aa).

The protein belongs to the bacterial ribosomal protein bL33 family.

The chain is Large ribosomal subunit protein bL33A from Leuconostoc mesenteroides subsp. mesenteroides (strain ATCC 8293 / DSM 20343 / BCRC 11652 / CCM 1803 / JCM 6124 / NCDO 523 / NBRC 100496 / NCIMB 8023 / NCTC 12954 / NRRL B-1118 / 37Y).